The sequence spans 546 residues: CTP synthase (546 aa).

The tract at residues 1-266 is amidoligase domain; sequence MTTNYIFVTG…DDLVCARFGI (266 aa). Ser-14 lines the CTP pocket. Ser-14 is a UTP binding site. ATP-binding positions include 15-20 and Asp-72; that span reads SLGKGI. Residues Asp-72 and Glu-140 each coordinate Mg(2+). Residues 147–149, 187–192, and Lys-223 contribute to the CTP site; these read DIE and KTKPTQ. Residues 187–192 and Lys-223 contribute to the UTP site; that span reads KTKPTQ. 239-241 provides a ligand contact to ATP; that stretch reads KDV. The Glutamine amidotransferase type-1 domain occupies 291–542; sequence TIGMVGKYIE…VKAAGQNARG (252 aa). Residue Gly-352 participates in L-glutamine binding. Cys-379 serves as the catalytic Nucleophile; for glutamine hydrolysis. L-glutamine is bound by residues 380 to 383, Glu-403, and Arg-470; that span reads LGMQ. Active-site residues include His-515 and Glu-517.

It belongs to the CTP synthase family. Homotetramer.

The catalysed reaction is UTP + L-glutamine + ATP + H2O = CTP + L-glutamate + ADP + phosphate + 2 H(+). It catalyses the reaction L-glutamine + H2O = L-glutamate + NH4(+). The enzyme catalyses UTP + NH4(+) + ATP = CTP + ADP + phosphate + 2 H(+). It functions in the pathway pyrimidine metabolism; CTP biosynthesis via de novo pathway; CTP from UDP: step 2/2. With respect to regulation, allosterically activated by GTP, when glutamine is the substrate; GTP has no effect on the reaction when ammonia is the substrate. The allosteric effector GTP functions by stabilizing the protein conformation that binds the tetrahedral intermediate(s) formed during glutamine hydrolysis. Inhibited by the product CTP, via allosteric rather than competitive inhibition. Its function is as follows. Catalyzes the ATP-dependent amination of UTP to CTP with either L-glutamine or ammonia as the source of nitrogen. Regulates intracellular CTP levels through interactions with the four ribonucleotide triphosphates. This Vibrio campbellii (strain ATCC BAA-1116) protein is CTP synthase.